The following is a 239-amino-acid chain: Ribulose-1,5-bisphosphate 5-phosphatase (239 aa).

Asp-8 acts as the Nucleophile in catalysis. Mg(2+) contacts are provided by Asp-8, Asp-10, and Asp-184. Asp-10 functions as the Proton donor in the catalytic mechanism. The segment at Pro-205–Ser-239 is disordered. The span at Ser-214 to Ile-228 shows a compositional bias: basic and acidic residues.

This sequence belongs to the HAD-like hydrolase superfamily. The cofactor is Mg(2+). Requires Mn(2+) as cofactor. Co(2+) serves as cofactor. Ni(2+) is required as a cofactor.

It catalyses the reaction D-ribulose 1,5-bisphosphate + H2O = D-ribulose 1-phosphate + phosphate. Requires both monovalent and divalent ions for optimal activity. Optimal KCl concentration is higher than 2.5 M. Its function is as follows. Phosphatase involved in the non-carboxylating pentose bisphosphate pathway, a nucleoside degradation pathway present in some halophilic archaea. Catalyzes the dephosphorylation of ribulose 1,5-bisphosphate (RuBP) to ribulose 1-phosphate (Ru1P). Shows a strict substrate specificity toward RuBP. This Halopiger xanaduensis (strain DSM 18323 / JCM 14033 / SH-6) protein is Ribulose-1,5-bisphosphate 5-phosphatase.